We begin with the raw amino-acid sequence, 166 residues long: Replication restart protein DnaT (166 aa).

This sequence belongs to the DnaT family. As to quaternary structure, homooligomerizes. Interacts with PriB. Component of the replication restart primosome. Primosome assembly occurs via a 'hand-off' mechanism. PriA binds to replication forks, subsequently PriB then DnaT bind; DnaT then displaces ssDNA to generate the helicase loading substrate.

Involved in the restart of stalled replication forks, which reloads the replicative helicase on sites other than the origin of replication. Can function in multiple replication restart pathways. Displaces ssDNA from a PriB-ssDNA complex. Probably forms a spiral filament on ssDNA. This Buchnera aphidicola subsp. Schizaphis graminum (strain Sg) protein is Replication restart protein DnaT.